The sequence spans 415 residues: MAIKKRSATVVPGASGAAAAVKNPQASKTSFWGELPQHVMSGISRMVPTLIMGGVILAFSQLIAYSWLKIPAEIGIMDALNSGKFSGFDLSLLKFAWLSQSFGGVLFGFAIPMFAAFVANSIGGKLAFPAGFIGGLMSTQPTQLLNFDPSTMQWATSSPVPSTFIGALIISIVAGYLVKWMNQKIQLPDFLLAFKTTFLLPILSAIFVMLAMYYVITPFGGWINGGIRTVLTAAGEKGALMYAMGIAAATAIDLGGPINKAAGFVAFSFTTDHVLPVTARSIAIVIPPIGLGLATIIDRRLTGKRLFNAQLYPQGKTAMFLAFMGISEGAIPFALESPITAIPSYMVGAIVGSTAAVWLGAVQWFPESAIWAWPLVTNLGVYMAGIALGAVITALMVVFLRLMMFRKGKLLIDSL.

Over 1-46 (MAIKKRSATVVPGASGAAAAVKNPQASKTSFWGELPQHVMSGISRM) the chain is Cytoplasmic. The 376-residue stretch at 35–410 (LPQHVMSGIS…RLMMFRKGKL (376 aa)) folds into the PTS EIIC type-2 domain. Residues 47–67 (VPTLIMGGVILAFSQLIAYSW) traverse the membrane as a helical segment. The Periplasmic portion of the chain corresponds to 68–101 (LKIPAEIGIMDALNSGKFSGFDLSLLKFAWLSQS). The helical transmembrane segment at 102–122 (FGGVLFGFAIPMFAAFVANSI) threads the bilayer. At 123-126 (GGKL) the chain is on the cytoplasmic side. The helical transmembrane segment at 127-147 (AFPAGFIGGLMSTQPTQLLNF) threads the bilayer. Residues 148 to 157 (DPSTMQWATS) lie on the Periplasmic side of the membrane. The chain crosses the membrane as a helical span at residues 158–178 (SPVPSTFIGALIISIVAGYLV). The Cytoplasmic segment spans residues 179 to 197 (KWMNQKIQLPDFLLAFKTT). Residues 198-218 (FLLPILSAIFVMLAMYYVITP) form a helical membrane-spanning segment. Over 219 to 237 (FGGWINGGIRTVLTAAGEK) the chain is Periplasmic. A helical transmembrane segment spans residues 238 to 258 (GALMYAMGIAAATAIDLGGPI). The Cytoplasmic segment spans residues 259–276 (NKAAGFVAFSFTTDHVLP). The chain crosses the membrane as a helical span at residues 277–297 (VTARSIAIVIPPIGLGLATII). Over 298–318 (DRRLTGKRLFNAQLYPQGKTA) the chain is Periplasmic. Residues 319 to 339 (MFLAFMGISEGAIPFALESPI) traverse the membrane as a helical segment. Residues 340-341 (TA) lie on the Cytoplasmic side of the membrane. Residues 342 to 362 (IPSYMVGAIVGSTAAVWLGAV) traverse the membrane as a helical segment. The Periplasmic segment spans residues 363-378 (QWFPESAIWAWPLVTN). A helical transmembrane segment spans residues 379–399 (LGVYMAGIALGAVITALMVVF). The Cytoplasmic portion of the chain corresponds to 400–415 (LRLMMFRKGKLLIDSL).

It is found in the cell inner membrane. The phosphoenolpyruvate-dependent sugar phosphotransferase system (PTS), a major carbohydrate active -transport system, catalyzes the phosphorylation of incoming sugar substrates concomitant with their translocation across the cell membrane. The sequence is that of Fructose-like permease IIC component 1 (fryC) from Escherichia coli (strain K12).